We begin with the raw amino-acid sequence, 365 residues long: Alanine racemase (365 aa).

Lys-32 functions as the Proton acceptor; specific for D-alanine in the catalytic mechanism. Residue Lys-32 is modified to N6-(pyridoxal phosphate)lysine. Arg-128 is a substrate binding site. Tyr-257 serves as the catalytic Proton acceptor; specific for L-alanine. Substrate is bound at residue Met-305.

It belongs to the alanine racemase family. Pyridoxal 5'-phosphate serves as cofactor.

The enzyme catalyses L-alanine = D-alanine. It participates in amino-acid biosynthesis; D-alanine biosynthesis; D-alanine from L-alanine: step 1/1. Functionally, catalyzes the interconversion of L-alanine and D-alanine. May also act on other amino acids. This chain is Alanine racemase (alr), found in Francisella tularensis subsp. tularensis (strain SCHU S4 / Schu 4).